Here is a 1081-residue protein sequence, read N- to C-terminus: WD repeat-containing protein 64 (1081 aa).

WD repeat units lie at residues 102 to 152, 153 to 198, 199 to 265, 266 to 314, 315 to 356, 357 to 400, 401 to 444, 445 to 488, 489 to 532, 533 to 631, 632 to 740, 741 to 803, 804 to 857, and 858 to 895; these read DPIA…ATQK, GLIT…GSSQ, ENYF…VLDS, KNFK…LEDN, LPVR…NIST, KPVG…TLSL, LQVF…TRMI, QDTK…ETGL, QVYQ…FGSG, QEMK…LIVE, RNFS…PQSS, KGSK…EGRL, LKDM…EKKF, and KQLL…RLWH. Residues 726–745 are compositionally biased toward low complexity; the sequence is CSSSQCESSKGPQSSKGSKQ. The tract at residues 726-757 is disordered; it reads CSSSQCESSKGPQSSKGSKQSIHDSEVKGEQT. The segment covering 746-756 has biased composition (basic and acidic residues); that stretch reads SIHDSEVKGEQ. The tract at residues 1036-1060 is disordered; sequence DSSDGITGKKKGGHVQREKAPRRRS. Basic residues predominate over residues 1043–1060; sequence GKKKGGHVQREKAPRRRS.

This chain is WD repeat-containing protein 64 (WDR64), found in Homo sapiens (Human).